The primary structure comprises 211 residues: uncharacterized protein (211 aa).

A run of 3 helical transmembrane segments spans residues 22–42, 111–131, and 133–153; these read FINF…GLKV, IIGA…WFPV, and GMAG…FMIT.

To E.coli YkgB. This sequence to H.influenzae HI_0219.

Its subcellular location is the cell membrane. This is an uncharacterized protein from Mannheimia haemolytica (Pasteurella haemolytica).